The chain runs to 63 residues: DNA gyrase inhibitor YacG (63 aa).

Zn(2+) contacts are provided by Cys9, Cys12, Cys28, and Cys32.

It belongs to the DNA gyrase inhibitor YacG family. Interacts with GyrB. Zn(2+) is required as a cofactor.

In terms of biological role, inhibits all the catalytic activities of DNA gyrase by preventing its interaction with DNA. Acts by binding directly to the C-terminal domain of GyrB, which probably disrupts DNA binding by the gyrase. This is DNA gyrase inhibitor YacG from Salmonella arizonae (strain ATCC BAA-731 / CDC346-86 / RSK2980).